The following is a 66-amino-acid chain: Large ribosomal subunit protein bL35 (66 aa).

Residues 21-40 (KIKSTQSAKRHGMTKRSKRS) form a disordered region. The segment covering 28–40 (AKRHGMTKRSKRS) has biased composition (basic residues).

It belongs to the bacterial ribosomal protein bL35 family.

This Ehrlichia canis (strain Jake) protein is Large ribosomal subunit protein bL35.